The sequence spans 509 residues: Solute carrier family 2, facilitated glucose transporter member 4 (509 aa).

At 1–23 (MPSGFQQIGSDDGEPPRQRVTGT) the chain is on the cytoplasmic side. The segment at 7 to 13 (QIGSDDG) is interaction with SRFBP1. Residue S10 is modified to Phosphoserine. A helical transmembrane segment spans residues 24–44 (LVLAVFSAVLGSLQFGYNIGV). Residues 45–80 (INAPQKVIEQSYNATWLGRQGPGGPDSIPQGTLTTL) lie on the Extracellular side of the membrane. N-linked (GlcNAc...) asparagine glycosylation is present at N57. The helical transmembrane segment at 81-101 (WALSVAIFSVGGMISSFLIGI) threads the bilayer. Residues 102-110 (ISQWLGRKR) lie on the Cytoplasmic side of the membrane. Residues 111–131 (AMLANNVLAVLGGALMGLANA) form a helical membrane-spanning segment. Over 132 to 141 (AASYEILILG) the chain is Extracellular. A helical membrane pass occupies residues 142–162 (RFLIGAYSGLTSGLVPMYVGE). The Cytoplasmic segment spans residues 163–170 (IAPTHLRG). The helical transmembrane segment at 171–191 (ALGTLNQLAIVIGILVAQVLG) threads the bilayer. Q177 is a binding site for D-glucose. The Extracellular portion of the chain corresponds to 192–200 (LESMLGTAT). The chain crosses the membrane as a helical span at residues 201-221 (LWPLLLALTVLPALLQLILLP). Residues 222–286 (FCPESPRYLY…QLLGSRTHRQ (65 aa)) are Cytoplasmic-facing. C223 carries the S-palmitoyl cysteine lipid modification. A Phosphoserine; by SGK1 modification is found at S274. The helical transmembrane segment at 287 to 307 (PLIIAVVLQLSQQLSGINAVF) threads the bilayer. Residues 298-299 (QQ) and N304 each bind D-glucose. Over 308 to 322 (YYSTSIFESAGVGQP) the chain is Extracellular. The chain crosses the membrane as a helical span at residues 323 to 343 (AYATIGAGVVNTVFTLVSVLL). N333 serves as a coordination point for D-glucose. Topologically, residues 344–352 (VERAGRRTL) are cytoplasmic. Residues 353-373 (HLLGLAGMCGCAILMTVALLL) traverse the membrane as a helical segment. Over 374–384 (LERVPAMSYVS) the chain is Extracellular. The chain crosses the membrane as a helical span at residues 385 to 405 (IVAIFGFVAFFEIGPGPIPWF). D-glucose is bound by residues E396 and W404. Residues 406-416 (IVAELFSQGPR) are Cytoplasmic-facing. The chain crosses the membrane as a helical span at residues 417 to 437 (PAAMAVAGFSNWTCNFIVGMG). Residues 438-444 (FQYVADA) lie on the Extracellular side of the membrane. Residues 445–465 (MGPYVFLLFAVLLLGFFIFTF) traverse the membrane as a helical segment. Topologically, residues 466-508 (LKVPETRGRTFDQISAAFRRTPSLLEQEVKPSTELEYLGPDEN) are cytoplasmic. T486 is subject to Phosphothreonine. S488 carries the post-translational modification Phosphoserine. The Dileucine internalization motif motif lies at 489-490 (LL).

Belongs to the major facilitator superfamily. Sugar transporter (TC 2.A.1.1) family. Glucose transporter subfamily. As to quaternary structure, binds to DAXX. Interacts via its N-terminus with SRFBP1. Interacts with NDUFA9. Interacts with TRARG1; the interaction is required for proper SLC2A4 recycling after insulin stimulation. In terms of processing, sumoylated. Palmitoylated. Palmitoylation by ZDHHC7 controls the insulin-dependent translocation of GLUT4 to the plasma membrane. As to expression, expressed in skeletal and cardiac muscles. Expressed in brown and white adipose tissues.

The protein localises to the cell membrane. Its subcellular location is the endomembrane system. It is found in the cytoplasm. It localises to the perinuclear region. The catalysed reaction is D-glucose(out) = D-glucose(in). In terms of biological role, insulin-regulated facilitative glucose transporter, which plays a key role in removal of glucose from circulation. Response to insulin is regulated by its intracellular localization: in the absence of insulin, it is efficiently retained intracellularly within storage compartments in muscle and fat cells. Upon insulin stimulation, translocates from these compartments to the cell surface where it transports glucose from the extracellular milieu into the cell. This chain is Solute carrier family 2, facilitated glucose transporter member 4, found in Mus musculus (Mouse).